Consider the following 1331-residue polypeptide: MTKEKPAVFYNRIIDKGRLKKLMSWAYTSFGSAHCATMADELKTLGFRYATQAGVSISVDDLQVPPIKRQMLDSAEQEIKTTEARYSRGEITEVERFQKVIDTWNSTSESLKDEVVKNFRETNPLNSVYMMAFSGARGNLSQVRQLVGMRGLMADPQGEIIDLPIKTNFREGLTVTEYIISSYGARKGLVDTALRTADSGYLTRRLVDVSQDVIVREEDCGTARGLKLRAMTDGEREQISLEDRLFGRVLNADVVDPKTGEVIAQRNQDIDADLAKKIATTVAEVEVRSPLTCEAARSVCRKCYGWSLAHGHMVDMGEAVGIIAAQSIGEPGTQLTMRTFHTGGVFTKEAARTIKASKAGTIQFKDGLSTRRMRTPHGDEVEQVEVAGTLVLKPSDNGKMVSHALSPGSFVLVAEGASVKKGDLLVEVGAGQKTQKSTERATKDVSSDLAGEVLFDNLIAEEKTDRQGNTTRSAQRSGLMWVLAGDVYNLPAGAEPVVENGTHVNVGDILAETKLVSLSGGVVRLIPNSREIEIVTASVLLDEAKVLHETGGGSEQYIIETSKGDQFLLKTAPGTKVQNNANIAELIDDRYRTTTGGIIKYSGVEVAKGTKKQGYEVLKGGTLLWIPEETHEVNKDSSLRIVEDGQYVEAGTEVVKDIFSQSAGVAEVIEKNDILREVIIKPGELHLTEEAIADKYHEQLIQPGEEVIPGVTIDKLSYGEKVISTEGVALLVRPVEEFQVEDTPVEPSQGSINEQGAGRNIELHAVQRLFFKDGERVKSVDGVSLLSTQLIIEIGAIEGEDEDVLANLYADIELQDDPTDDEVKRLQLVILESLILRRDSDSDPFGGQVQTRLMVEDGQEIVPGAVVARTEIQCKEPGEVRGIRSGQEAIRRLLIVRDSDRQTLAIDGKAKVKENTLVVAGTEIAEGVVIEDSAQVLKVSDKEIVLRHARPYRVSGGAVLHIDEGDLVQRGDNLVLLVFERAKTGDIIQGLPRIEELLEARKPKEAAVLARRPGTCQVEYLDDETVDVKVIEDDGVISEYPVSLNQSVMVVDGQRVGPAEPLTDGLNNPHEILEIFFDYYAESKGIYEAALIGLRESQRFLVEEVQRVYQSQGIDISDKHIEVIVRQMTAKVRIDDGGDTTMLPGELIELRQVEQVNEAMSITGGAPARYTPVLLGITKASLNTDSFISAASFQETTRVLTEAAIEGKSDWLRGLKENVIIGRLIPAGTGFASQNDFVDEGTSRSPNGYSNVVTNDNGAGLSSRTYDDLDGSEILDDQTARAFTEGKSNRKDIISGDELISDDTPIPSDVQGKAPVIDDDAMIDDNWMKDQ.

Cysteine 220, cysteine 293, cysteine 300, and cysteine 303 together coordinate Zn(2+). Disordered stretches follow at residues 1236-1257 and 1294-1331; these read DFVD…TNDN and ISGD…MKDQ. Over residues 1243–1257 the composition is skewed to polar residues; that stretch reads SRSPNGYSNVVTNDN.

It belongs to the RNA polymerase beta' chain family. RpoC2 subfamily. In cyanobacteria the RNAP catalytic core is composed of 2 alpha, 1 beta, 1 beta', 1 gamma and 1 omega subunit. When a sigma factor is associated with the core the holoenzyme is formed, which can initiate transcription. It depends on Zn(2+) as a cofactor.

The enzyme catalyses RNA(n) + a ribonucleoside 5'-triphosphate = RNA(n+1) + diphosphate. Its function is as follows. DNA-dependent RNA polymerase catalyzes the transcription of DNA into RNA using the four ribonucleoside triphosphates as substrates. The sequence is that of DNA-directed RNA polymerase subunit beta' from Picosynechococcus sp. (strain ATCC 27264 / PCC 7002 / PR-6) (Agmenellum quadruplicatum).